The sequence spans 64 residues: Conotoxin VnMLCL-05 (64 aa).

Residues M1–P19 form the signal peptide. Positions N20–D43 are excised as a propeptide. At K63 the chain carries Lysine amide.

The protein belongs to the conotoxin T superfamily. In terms of tissue distribution, expressed by the venom duct.

It is found in the secreted. In Conus ventricosus (Mediterranean cone), this protein is Conotoxin VnMLCL-05.